Here is a 96-residue protein sequence, read N- to C-terminus: Molybdopterin synthase sulfur carrier subunit (96 aa).

Residue Gly96 is modified to 1-thioglycine; alternate. Gly96 is subject to Glycyl adenylate; alternate.

It belongs to the MoaD family. MOCS2A subfamily. As to quaternary structure, heterotetramer; composed of 2 small (MOCS2A) and 2 large (MOCS2B) subunits. C-terminal thiocarboxylation occurs in 2 steps, it is first acyl-adenylated (-COAMP) via the hesA/moeB/thiF part of UBA4, then thiocarboxylated (-COSH) via the rhodanese domain of UBA4.

The protein localises to the cytoplasm. It participates in cofactor biosynthesis; molybdopterin biosynthesis. Functionally, acts as a sulfur carrier required for molybdopterin biosynthesis. Component of the molybdopterin synthase complex that catalyzes the conversion of precursor Z into molybdopterin by mediating the incorporation of 2 sulfur atoms into precursor Z to generate a dithiolene group. In the complex, serves as sulfur donor by being thiocarboxylated (-COSH) at its C-terminus by UBA4. After interaction with MOCS2B, the sulfur is then transferred to precursor Z to form molybdopterin. In Phaeosphaeria nodorum (strain SN15 / ATCC MYA-4574 / FGSC 10173) (Glume blotch fungus), this protein is Molybdopterin synthase sulfur carrier subunit.